The sequence spans 134 residues: Holo-[acyl-carrier-protein] synthase (134 aa).

Mg(2+) is bound by residues aspartate 8 and glutamate 57.

This sequence belongs to the P-Pant transferase superfamily. AcpS family. Mg(2+) serves as cofactor.

Its subcellular location is the cytoplasm. It catalyses the reaction apo-[ACP] + CoA = holo-[ACP] + adenosine 3',5'-bisphosphate + H(+). In terms of biological role, transfers the 4'-phosphopantetheine moiety from coenzyme A to a Ser of acyl-carrier-protein. The protein is Holo-[acyl-carrier-protein] synthase of Rhizobium etli (strain ATCC 51251 / DSM 11541 / JCM 21823 / NBRC 15573 / CFN 42).